Here is a 579-residue protein sequence, read N- to C-terminus: Adenine/guanine permease AZG1 (579 aa).

Helical transmembrane passes span 52 to 72 (AGTA…SILS), 131 to 151 (LIVA…LMAN), 183 to 203 (TALA…AIGF), 221 to 241 (AGIG…IGLV), 260 to 280 (ISLA…AGGS), 292 to 312 (MESP…YCLV), 320 to 340 (IYGI…VTAF), 379 to 399 (FWEA…GTLY), 414 to 434 (FAGQ…GSLL), 459 to 479 (AITV…LASI), 480 to 500 (PAWA…KSVT), and 514 to 534 (FVTM…IGGI).

The protein belongs to the nucleobase:cation symporter-2 (NCS2) (TC 2.A.40) family. Azg-like subfamily.

It localises to the membrane. In terms of biological role, transports natural purines (adenine and guanine) as well as purine analogs. Confers sensitivity to 8-azaadenine and 8-azaguanine (8-azg). The sequence is that of Adenine/guanine permease AZG1 (AZG1) from Arabidopsis thaliana (Mouse-ear cress).